We begin with the raw amino-acid sequence, 247 residues long: Epidermal cell differentiation inhibitor (247 aa).

A signal peptide spans 1-35; that stretch reads MKNKLLFKIFLSLSLALSVYSINDKIIEVSNTSLA. A TR mART core domain is found at 39–247; it reads KNFTDLDEAT…IIITAIVFKK (209 aa). Active-site residues include R120, S173, and E215.

It to ADP-ribosyltransferase C3 of Clostridium.

Its function is as follows. Inhibits terminal differentiation of cultured mouse keratinocytes. In culture, also inhibits the differentiation of human keratinocytes. Probable ADP-ribosyltransferase. This Staphylococcus aureus protein is Epidermal cell differentiation inhibitor.